The sequence spans 310 residues: Aspartate carbamoyltransferase catalytic subunit (310 aa).

2 residues coordinate carbamoyl phosphate: R58 and T59. Residue K86 coordinates L-aspartate. Positions 108, 136, and 139 each coordinate carbamoyl phosphate. 2 residues coordinate L-aspartate: R169 and R224. Residues G265 and P266 each coordinate carbamoyl phosphate.

Belongs to the aspartate/ornithine carbamoyltransferase superfamily. ATCase family. In terms of assembly, heterododecamer (2C3:3R2) of six catalytic PyrB chains organized as two trimers (C3), and six regulatory PyrI chains organized as three dimers (R2).

The catalysed reaction is carbamoyl phosphate + L-aspartate = N-carbamoyl-L-aspartate + phosphate + H(+). It functions in the pathway pyrimidine metabolism; UMP biosynthesis via de novo pathway; (S)-dihydroorotate from bicarbonate: step 2/3. Its function is as follows. Catalyzes the condensation of carbamoyl phosphate and aspartate to form carbamoyl aspartate and inorganic phosphate, the committed step in the de novo pyrimidine nucleotide biosynthesis pathway. This is Aspartate carbamoyltransferase catalytic subunit from Citrifermentans bemidjiense (strain ATCC BAA-1014 / DSM 16622 / JCM 12645 / Bem) (Geobacter bemidjiensis).